The primary structure comprises 237 residues: Phosphoglycolate phosphatase (237 aa).

The active-site Nucleophile is aspartate 15. Mg(2+) is bound by residues aspartate 15, aspartate 17, and aspartate 177.

It belongs to the HAD-like hydrolase superfamily. CbbY/CbbZ/Gph/YieH family. It depends on Mg(2+) as a cofactor.

It carries out the reaction 2-phosphoglycolate + H2O = glycolate + phosphate. Its pathway is organic acid metabolism; glycolate biosynthesis; glycolate from 2-phosphoglycolate: step 1/1. Its function is as follows. Specifically catalyzes the dephosphorylation of 2-phosphoglycolate. Is involved in the dissimilation of the intracellular 2-phosphoglycolate formed during the DNA repair of 3'-phosphoglycolate ends, a major class of DNA lesions induced by oxidative stress. The sequence is that of Phosphoglycolate phosphatase from Caulobacter vibrioides (strain ATCC 19089 / CIP 103742 / CB 15) (Caulobacter crescentus).